A 398-amino-acid polypeptide reads, in one-letter code: cAMP-dependent protein kinase, catalytic subunit-like (398 aa).

The Protein kinase domain occupies 90 to 344 (LERIITIGKG…TQDVKDHKWF (255 aa)). Residues 96-104 (IGKGTFGRV) and Lys-119 each bind ATP. The active-site Proton acceptor is Asp-213. Residues 345–398 (EKVNWDDTLHLRVEPPIVPTLYHPGDTGNFDDYEEDTTGGPLCSQRDRDLFAEW) enclose the AGC-kinase C-terminal domain.

It belongs to the protein kinase superfamily. Ser/Thr protein kinase family. cAMP subfamily.

The enzyme catalyses L-seryl-[protein] + ATP = O-phospho-L-seryl-[protein] + ADP + H(+). It catalyses the reaction L-threonyl-[protein] + ATP = O-phospho-L-threonyl-[protein] + ADP + H(+). This Caenorhabditis elegans protein is cAMP-dependent protein kinase, catalytic subunit-like.